The sequence spans 522 residues: Lysophospholipid acyltransferase LPCAT4 (522 aa).

A run of 2 helical transmembrane segments spans residues 43-63 and 92-112; these read ILGF…LFLM and HLIY…WITI. An HXXXXD motif motif is present at residues 130–135; that stretch reads HSTFFD. 2 N-linked (GlcNAc...) asparagine glycosylation sites follow: Asn166 and Asn517. The tract at residues 496 to 522 is disordered; it reads GRRKPPHIQQNGGCSGKNNPRNQSKMD. The span at 503-522 shows a compositional bias: polar residues; it reads IQQNGGCSGKNNPRNQSKMD.

This sequence belongs to the 1-acyl-sn-glycerol-3-phosphate acyltransferase family.

It is found in the endoplasmic reticulum membrane. It catalyses the reaction a 1-acyl-sn-glycero-3-phosphoethanolamine + an acyl-CoA = a 1,2-diacyl-sn-glycero-3-phosphoethanolamine + CoA. The enzyme catalyses a 1-O-(1Z-alkenyl)-sn-glycero-3-phosphoethanolamine + an acyl-CoA = a 1-O-(1Z-alkenyl)-2-acyl-sn-glycero-3-phosphoethanolamine + CoA. The catalysed reaction is a 1-acyl-sn-glycero-3-phosphocholine + an acyl-CoA = a 1,2-diacyl-sn-glycero-3-phosphocholine + CoA. It carries out the reaction a 1-O-alkyl-sn-glycero-3-phosphocholine + acetyl-CoA = a 1-O-alkyl-2-acetyl-sn-glycero-3-phosphocholine + CoA. It catalyses the reaction a 1-acyl-sn-glycero-3-phospho-L-serine + an acyl-CoA = a 1,2-diacyl-sn-glycero-3-phospho-L-serine + CoA. It participates in lipid metabolism; phospholipid metabolism. In terms of biological role, displays acyl-CoA-dependent lysophospholipid acyltransferase activity with a subset of lysophospholipids as substrates. Prefers long chain acyl-CoAs (C16, C18) as acyl donors. This is Lysophospholipid acyltransferase LPCAT4 (lpcat4) from Xenopus tropicalis (Western clawed frog).